We begin with the raw amino-acid sequence, 40 residues long: Antimicrobial peptide 1 (40 aa).

Residues 1–40 (AQCGAQGGGATCPGGLCCSQWGWCGSTPKYCGAGCQSNCK) enclose the Chitin-binding type-1 domain. 4 disulfides stabilise this stretch: Cys-3/Cys-18, Cys-12/Cys-24, Cys-17/Cys-31, and Cys-35/Cys-39.

In terms of processing, not glycosylated.

Its function is as follows. Antimicrobial peptide active against plant pathogenic fungi and Gram-negative and -positive bacteria. The polypeptide is Antimicrobial peptide 1 (Fagopyrum esculentum (Common buckwheat)).